A 222-amino-acid chain; its full sequence is Orotidine 5'-phosphate decarboxylase (222 aa).

Substrate is bound by residues Asp11, Lys30, 59 to 68, Ser115, 164 to 174, Gly187, and Arg188; these read DFKLADIGYI and PGMGSQGGSYG. Residue Lys61 is the Proton donor of the active site.

The protein belongs to the OMP decarboxylase family. Type 1 subfamily. Homodimer.

The enzyme catalyses orotidine 5'-phosphate + H(+) = UMP + CO2. The protein operates within pyrimidine metabolism; UMP biosynthesis via de novo pathway; UMP from orotate: step 2/2. Catalyzes the decarboxylation of orotidine 5'-monophosphate (OMP) to uridine 5'-monophosphate (UMP). This chain is Orotidine 5'-phosphate decarboxylase, found in Saccharolobus solfataricus (strain ATCC 35092 / DSM 1617 / JCM 11322 / P2) (Sulfolobus solfataricus).